A 35-amino-acid chain; its full sequence is PTEN upstream open reading frame MP31 (35 aa).

In terms of assembly, interacts with lactate dehydrogenases LDHA and LDHB; interaction with mitochondrial LDH leads to inhibition of lactate dehydrogenase activity, preventing conversion of lactate to pyruvate. As to expression, detected in brain, kidney and liver (at protein level).

The protein resides in the mitochondrion. Functionally, inhibits lactate dehydrogenase (LDH)-mediated conversion of lactate to pyruvate in mitochondria by competing with mitochondrial LDH for binding to NAD(+). Also inhibits cellular lactate utilization. This is PTEN upstream open reading frame MP31 from Mus musculus (Mouse).